The chain runs to 361 residues: 3-dehydroquinate synthase (361 aa).

NAD(+) is bound by residues 72 to 77 (SGEKEK), 130 to 131 (TT), lysine 142, and lysine 151. Positions 184, 247, and 264 each coordinate Zn(2+).

The protein belongs to the sugar phosphate cyclases superfamily. Dehydroquinate synthase family. Requires Co(2+) as cofactor. The cofactor is Zn(2+). It depends on NAD(+) as a cofactor.

Its subcellular location is the cytoplasm. The enzyme catalyses 7-phospho-2-dehydro-3-deoxy-D-arabino-heptonate = 3-dehydroquinate + phosphate. The protein operates within metabolic intermediate biosynthesis; chorismate biosynthesis; chorismate from D-erythrose 4-phosphate and phosphoenolpyruvate: step 2/7. In terms of biological role, catalyzes the conversion of 3-deoxy-D-arabino-heptulosonate 7-phosphate (DAHP) to dehydroquinate (DHQ). This chain is 3-dehydroquinate synthase, found in Bacillus mycoides (strain KBAB4) (Bacillus weihenstephanensis).